A 196-amino-acid chain; its full sequence is Acyl-homoserine-lactone synthase (196 aa).

The protein belongs to the autoinducer synthase family.

The enzyme catalyses a fatty acyl-[ACP] + S-adenosyl-L-methionine = an N-acyl-L-homoserine lactone + S-methyl-5'-thioadenosine + holo-[ACP] + H(+). Functionally, required for the synthesis of a yet unknown N-aceyl-homoserine lactone (N-aceyl-HSL), an autoinducer molecule which binds to PhzR and thus regulates phenazine production. The polypeptide is Acyl-homoserine-lactone synthase (phzI) (Pseudomonas chlororaphis (Pseudomonas aureofaciens)).